The following is a 208-amino-acid chain: Imidazoleglycerol-phosphate dehydratase (208 aa).

The protein belongs to the imidazoleglycerol-phosphate dehydratase family.

It is found in the cytoplasm. The enzyme catalyses D-erythro-1-(imidazol-4-yl)glycerol 3-phosphate = 3-(imidazol-4-yl)-2-oxopropyl phosphate + H2O. It functions in the pathway amino-acid biosynthesis; L-histidine biosynthesis; L-histidine from 5-phospho-alpha-D-ribose 1-diphosphate: step 6/9. The sequence is that of Imidazoleglycerol-phosphate dehydratase from Prochlorococcus marinus (strain MIT 9211).